Consider the following 47-residue polypeptide: Delta-actitoxin-Ael1b (47 aa).

3 cysteine pairs are disulfide-bonded: C4–C44, C6–C34, and C27–C45.

This sequence belongs to the sea anemone sodium channel inhibitory toxin family. Type I subfamily.

It is found in the secreted. The protein resides in the nematocyst. Its function is as follows. Produces a positive inotropic effect in mammalian heart muscle. Modifies current passing through the fast sodium channel (Nav) in neuroblastoma cells, leading to delayed and incomplete inactivation. Paralyzes the shore crab (C.maenas) by tetanic contractions after intramuscular injection. In Anthopleura elegantissima (Green aggregating anemone), this protein is Delta-actitoxin-Ael1b.